We begin with the raw amino-acid sequence, 695 residues long: Adhesion G protein-coupled receptor F4 (695 aa).

Residues 1–21 (MKMKSQATMICCLVFFLSTEC) form the signal peptide. Topologically, residues 22–406 (SHYRSKIHLK…TDKVLDYITC (385 aa)) are extracellular. N61, N169, N177, N209, N229, N250, N257, N263, N264, N286, N309, and N340 each carry an N-linked (GlcNAc...) asparagine glycan. A GAIN-B domain is found at 249–397 (HNTSEKSLNF…SILMSSKSMT (149 aa)). 2 cysteine pairs are disulfide-bonded: C349-C376 and C364-C378. Positions 349–397 (CVGWHSKKRRWDEKACQMMLDIRNEVKCRCNYTSVVMSFSILMSSKSMT) are GPS. An N-linked (GlcNAc...) asparagine glycan is attached at N379. Residues 407–427 (IGLSVSILSLVLCLIIEATVW) traverse the membrane as a helical segment. The Cytoplasmic portion of the chain corresponds to 428-440 (SRVVVTEISYMRH). Residues 441 to 461 (VCIVNIAVSLLTANVWFIIGS) traverse the membrane as a helical segment. Topologically, residues 462 to 485 (HFNIKAQDYNMCVAVTFFSHFFYL) are extracellular. The chain crosses the membrane as a helical span at residues 486-506 (SLFFWMLFKALLIIYGILVIF). Topologically, residues 507–515 (RRMMKSRMM) are cytoplasmic. The chain crosses the membrane as a helical span at residues 516-536 (VIGFAIGYGCPLIIAVTTVAI). The Extracellular portion of the chain corresponds to 537-561 (TEPEKGYMRPEACWLNWDNTKALLA). A helical membrane pass occupies residues 562–582 (FAIPAFVIVAVNLIVVLVVAV). At 583–606 (NTQRPSIGSSKSQDVVIIMRISKN) the chain is on the cytoplasmic side. A helical membrane pass occupies residues 607 to 627 (VAILTPLLGLTWGFGIATLIE). Over 628–634 (GTSLTFH) the chain is Extracellular. The chain crosses the membrane as a helical span at residues 635–655 (IIFALLNAFQGFFILLFGTIM). Residues 656-695 (DHKIRDALRMRMSSLKGKSRAAENASLGPTNGSKLMNRQG) lie on the Cytoplasmic side of the membrane. The tract at residues 674 to 695 (SRAAENASLGPTNGSKLMNRQG) is disordered. Polar residues predominate over residues 682 to 695 (LGPTNGSKLMNRQG).

The protein belongs to the G-protein coupled receptor 2 family. Adhesion G-protein coupled receptor (ADGR) subfamily.

The protein localises to the membrane. Its function is as follows. Orphan receptor. In Homo sapiens (Human), this protein is Adhesion G protein-coupled receptor F4 (ADGRF4).